The chain runs to 293 residues: Pantothenate synthetase (293 aa).

Residue 38–45 (MGALHEGH) participates in ATP binding. Residue His45 is the Proton donor of the active site. Gln69 is a (R)-pantoate binding site. Gln69 lines the beta-alanine pocket. 155 to 158 (GEKD) contacts ATP. Residue Gln161 coordinates (R)-pantoate. 192 to 195 (QSSR) lines the ATP pocket.

It belongs to the pantothenate synthetase family. As to quaternary structure, homodimer.

Its subcellular location is the cytoplasm. It catalyses the reaction (R)-pantoate + beta-alanine + ATP = (R)-pantothenate + AMP + diphosphate + H(+). Its pathway is cofactor biosynthesis; (R)-pantothenate biosynthesis; (R)-pantothenate from (R)-pantoate and beta-alanine: step 1/1. Functionally, catalyzes the condensation of pantoate with beta-alanine in an ATP-dependent reaction via a pantoyl-adenylate intermediate. The chain is Pantothenate synthetase from Hyphomonas neptunium (strain ATCC 15444).